Here is a 552-residue protein sequence, read N- to C-terminus: Putative transport protein YPN_3727 (552 aa).

The next 6 membrane-spanning stretches (helical) occupy residues 1–21, 26–46, 65–85, 96–116, 119–139, and 158–178; these read MSAI…GLWI, IYGV…VGHF, FGLI…FFSS, FAIL…KLFA, LPII…LGAA, and MGYA…MWLI. 2 consecutive RCK C-terminal domains span residues 192–276 and 279–361; these read AFDS…VVGE and DVTL…IVGN. 6 consecutive transmembrane segments (helical) span residues 371–391, 393–413, 439–459, 464–484, 493–513, and 530–550; these read MLPV…PLFV, GFPA…ALIL, IVLF…NTLV, LAWI…VGIL, YLTL…LAFA, and VYPL…VLFW.

It belongs to the AAE transporter (TC 2.A.81) family. YidE subfamily.

Its subcellular location is the cell membrane. The chain is Putative transport protein YPN_3727 from Yersinia pestis bv. Antiqua (strain Nepal516).